The following is a 632-amino-acid chain: Probable potassium transport system protein Kup 3 (632 aa).

The next 12 helical transmembrane spans lie at 17–37 (LFYL…TSPL), 60–80 (LISL…VLFL), 106–126 (TAIL…DAMI), 144–164 (PSLS…LFVV), 175–195 (FFGP…ISHI), 210–230 (AVSF…AVFL), 254–274 (WFLL…ALVL), 292–312 (ALLP…QAVI), 344–364 (IFVP…VLSF), 370–390 (LATA…IMAF), 401–421 (LPLA…FLGA), and 426–446 (IHDG…IMWT).

It belongs to the HAK/KUP transporter (TC 2.A.72) family.

It localises to the cell inner membrane. The enzyme catalyses K(+)(in) + H(+)(in) = K(+)(out) + H(+)(out). Functionally, transport of potassium into the cell. Likely operates as a K(+):H(+) symporter. This is Probable potassium transport system protein Kup 3 from Rhizobium etli (strain ATCC 51251 / DSM 11541 / JCM 21823 / NBRC 15573 / CFN 42).